A 307-amino-acid polypeptide reads, in one-letter code: Cytochrome f (307 aa).

The first 24 residues, 1–24 (MKKNLFLVSVFASLFVGTANNALA), serve as a signal peptide directing secretion. Residues Tyr-25, Cys-45, Cys-48, and His-49 each coordinate heme. The helical transmembrane segment at 273-293 (LQGLVIFLGFVLIAQVFLVLK) threads the bilayer.

This sequence belongs to the cytochrome f family. As to quaternary structure, the 4 large subunits of the cytochrome b6-f complex are cytochrome b6, subunit IV (17 kDa polypeptide, petD), cytochrome f and the Rieske protein, while the 4 small subunits are PetG, PetL, PetM and PetN. The complex functions as a dimer. It depends on heme as a cofactor.

Its subcellular location is the plastid. The protein resides in the chloroplast thylakoid membrane. In terms of biological role, component of the cytochrome b6-f complex, which mediates electron transfer between photosystem II (PSII) and photosystem I (PSI), cyclic electron flow around PSI, and state transitions. This Ostreococcus tauri protein is Cytochrome f.